Consider the following 326-residue polypeptide: Vitamin B12 import system permease protein BtuC (326 aa).

A run of 9 helical transmembrane segments spans residues L19–L39, L61–F81, P88–G108, L112–L132, L146–F166, G184–I204, G240–I260, V274–A294, and E302–L322.

This sequence belongs to the binding-protein-dependent transport system permease family. FecCD subfamily. In terms of assembly, the complex is composed of two ATP-binding proteins (BtuD), two transmembrane proteins (BtuC) and a solute-binding protein (BtuF).

The protein resides in the cell inner membrane. Functionally, part of the ABC transporter complex BtuCDF involved in vitamin B12 import. Involved in the translocation of the substrate across the membrane. The chain is Vitamin B12 import system permease protein BtuC from Escherichia coli O6:K15:H31 (strain 536 / UPEC).